The following is a 275-amino-acid chain: Elongation factor Ts (275 aa).

The tract at residues 76 to 79 is involved in Mg(2+) ion dislocation from EF-Tu; sequence TDFV.

It belongs to the EF-Ts family.

Its subcellular location is the cytoplasm. Associates with the EF-Tu.GDP complex and induces the exchange of GDP to GTP. It remains bound to the aminoacyl-tRNA.EF-Tu.GTP complex up to the GTP hydrolysis stage on the ribosome. The chain is Elongation factor Ts from Rhodococcus opacus (strain B4).